The chain runs to 335 residues: Mycobacterial beta-ketoacyl-[acyl-carrier-protein] synthase III (335 aa).

Residues Cys122 and His258 contribute to the active site. Residues 259-263 (QANSR) are ACP-binding. Asn289 is a catalytic residue.

The protein belongs to the thiolase-like superfamily. FabH family. Homodimer.

The protein localises to the cytoplasm. The catalysed reaction is malonyl-[ACP] + dodecanoyl-CoA + H(+) = 3-oxotetradecanoyl-[ACP] + CO2 + CoA. It participates in lipid metabolism; fatty acid biosynthesis. It functions in the pathway lipid metabolism; mycolic acid biosynthesis. Its function is as follows. Catalyzes the condensation reaction of fatty acid synthesis by the addition to an acyl acceptor of two carbons from malonyl-ACP. Catalyzes the first condensation reaction which initiates fatty acid synthesis and may therefore play a role in governing the total rate of fatty acid production. Possesses both acetoacetyl-ACP synthase and acetyl transacylase activities. Its substrate specificity determines the biosynthesis of branched-chain and/or straight-chain of fatty acids. This chain is Mycobacterial beta-ketoacyl-[acyl-carrier-protein] synthase III, found in Mycobacterium marinum (strain ATCC BAA-535 / M).